The sequence spans 374 residues: O-methyltransferase acrG (374 aa).

S-adenosyl-L-homocysteine contacts are provided by tyrosine 19, asparagine 70, aspartate 96, serine 128, and phenylalanine 129. Residue phenylalanine 245 coordinates Mg(2+).

The protein belongs to the methyltransferase superfamily. Type-7 methyltransferase family.

It participates in secondary metabolite biosynthesis. O-methyltransferase; part of the cluster that mediates the biosynthesis of acurin A, a highly reduced polyketide coupled to a serine via a peptide bond. The activities of the highly reducing polyketide synthase acrA and the nonribosomal peptide synthetase acrB are collectively responsible for the synthesis of the acurin A core structure with a heptaketide backbone produced by acrA covalently fused to a L-serine by acrB. After the formation of the PK-NRP hybrid product, it is detached from acrB by reductive release to set up the formation of the lactam ring by aldol condensation. The hydrolyase acrC then catalyzes water loss to generate a double bond in the ring. This double bond is probably reduced, which is followed by three oxidations at C-22 to generate the carboxylic acid moiety, involving probably the FAD-binding monooxygenase acrE and the cytochrome P450 monooxygenases acrD and acrF. Finally, a last methylation step performed by the O-methyltransferase acrG leads to the production of acurin A. This is O-methyltransferase acrG from Aspergillus aculeatus (strain ATCC 16872 / CBS 172.66 / WB 5094).